The primary structure comprises 259 residues: Pimeloyl-[acyl-carrier protein] methyl ester esterase (259 aa).

The AB hydrolase-1 domain maps to 16 to 244; it reads LVFIHGWGLN…ASHAPFLSHP (229 aa). Substrate is bound by residues W22, 82-83, and 143-147; these read SL and FFNIQ. Residue S82 is the Nucleophile of the active site. Catalysis depends on residues D207 and H237. Residue H237 coordinates substrate.

Belongs to the AB hydrolase superfamily. Carboxylesterase BioH family. As to quaternary structure, monomer.

The protein localises to the cytoplasm. It carries out the reaction 6-carboxyhexanoyl-[ACP] methyl ester + H2O = 6-carboxyhexanoyl-[ACP] + methanol + H(+). The protein operates within cofactor biosynthesis; biotin biosynthesis. In terms of biological role, the physiological role of BioH is to remove the methyl group introduced by BioC when the pimeloyl moiety is complete. It allows to synthesize pimeloyl-ACP via the fatty acid synthetic pathway through the hydrolysis of the ester bonds of pimeloyl-ACP esters. The protein is Pimeloyl-[acyl-carrier protein] methyl ester esterase of Wigglesworthia glossinidia brevipalpis.